The primary structure comprises 474 residues: Sulfide dehydrogenase subunit alpha (474 aa).

The propeptide occupies 1–2; sequence MP. Cys-42, Cys-45, Cys-52, and Cys-56 together coordinate [4Fe-4S] cluster. [3Fe-4S] cluster-binding residues include Cys-101, Cys-107, and Cys-111.

Heterodimer of alpha and beta subunits. Requires FAD as cofactor. [3Fe-4S] cluster serves as cofactor. [4Fe-4S] cluster is required as a cofactor.

It localises to the cytoplasm. The catalysed reaction is n sulfur + hydrogen sulfide + NADP(+) = (n+1) sulfur + NADPH. It carries out the reaction 2 reduced [2Fe-2S]-[ferredoxin] + NADP(+) + H(+) = 2 oxidized [2Fe-2S]-[ferredoxin] + NADPH. Its function is as follows. A bifunctional enzyme that catalyzes the reduction of elemental sulfur or polysulfide to hydrogen sulfide with NADPH as electron donor. Also functions as a reduced ferredoxin:NADP oxidoreductase with a very high affinity for reduced ferredoxin. Exhibits a broad specificity for various physiological and non-physiological substrates with varied reduction potentials such as methyl viologen, benzyl viologen, FAD, FMN, methylene blue, 2,6-dichlorophenolindophenol (DCIP), cytochrome C and ferricyanide with highest preference for benzyl viologen. Does not reduce fumarate, succinate, nitrate, nitrite, sulfate, sulfite or protons. Does not possess any hydrogenase activity or NADPH-dependent glutamate synthase activity. In Pyrococcus furiosus (strain ATCC 43587 / DSM 3638 / JCM 8422 / Vc1), this protein is Sulfide dehydrogenase subunit alpha.